The following is a 463-amino-acid chain: MAVHNFDVVVIGSGPAGESAAINAAKHGKRVAIVEKQQAVGGNCTHWGTIPSKALRHQVKQIMQFNTNRMFRDIGEPRWFSFPRVLERSKVTIDQQVEMRTQFYSRNRINLFFGVARFRDEHTLTVRDNQDGVEELCAQQFVIATGSRPYRPADINFRHPRIYCSDTILGLSHTPRTLIIFGAGVIGSEYASIFSGLGVKVDLIDMRERLLSFLDDEISDALSYHLRQNGVLVRHNEDYESIEGDESGVIVKLKSGKRLRADAFLWANGRTGNTDELGLENIGLEPNGRGQLQVDEHYRTMVPHIYAVGDVIGWPSLASAAYDQGRSASDDFLDEDFRFVEDIPTGIYTIPEISSVGKNERELTEAKVPYEVAQAFFKDTARAQITGDTVGMLKILFHRETLEILGIHCFGDQASEILHIGQAIMQQKGEANTLKYFINTTFNYPTMAEAYRVAAQNGLNRVF.

35–44 (EKQQAVGGNC) contributes to the FAD binding site.

The protein belongs to the class-I pyridine nucleotide-disulfide oxidoreductase family. Requires FAD as cofactor.

Its subcellular location is the cytoplasm. The catalysed reaction is NAD(+) + NADPH = NADH + NADP(+). Conversion of NADPH, generated by peripheral catabolic pathways, to NADH, which can enter the respiratory chain for energy generation. This Chromohalobacter salexigens (strain ATCC BAA-138 / DSM 3043 / CIP 106854 / NCIMB 13768 / 1H11) protein is Soluble pyridine nucleotide transhydrogenase.